A 343-amino-acid polypeptide reads, in one-letter code: Holliday junction branch migration complex subunit RuvB (343 aa).

The segment at 1–23 (MSDDFEVVRPEEQAGDEKDRDLR) is disordered. A large ATPase domain (RuvB-L) region spans residues 1–183 (MSDDFEVVRP…FGIVQRFEFY (183 aa)). Residues L22, R23, G64, K67, T68, T69, 130–132 (EDY), R173, Y183, and R220 each bind ATP. T68 is a binding site for Mg(2+). Residues 184–254 (SHEELASIIS…TVAAGLKQLN (71 aa)) form a small ATPAse domain (RuvB-S) region. The segment at 257–343 (GLGLETYDRQ…LGDGQEGLFD (87 aa)) is head domain (RuvB-H). Positions 312 and 317 each coordinate DNA.

It belongs to the RuvB family. Homohexamer. Forms an RuvA(8)-RuvB(12)-Holliday junction (HJ) complex. HJ DNA is sandwiched between 2 RuvA tetramers; dsDNA enters through RuvA and exits via RuvB. An RuvB hexamer assembles on each DNA strand where it exits the tetramer. Each RuvB hexamer is contacted by two RuvA subunits (via domain III) on 2 adjacent RuvB subunits; this complex drives branch migration. In the full resolvosome a probable DNA-RuvA(4)-RuvB(12)-RuvC(2) complex forms which resolves the HJ.

Its subcellular location is the cytoplasm. The enzyme catalyses ATP + H2O = ADP + phosphate + H(+). In terms of biological role, the RuvA-RuvB-RuvC complex processes Holliday junction (HJ) DNA during genetic recombination and DNA repair, while the RuvA-RuvB complex plays an important role in the rescue of blocked DNA replication forks via replication fork reversal (RFR). RuvA specifically binds to HJ cruciform DNA, conferring on it an open structure. The RuvB hexamer acts as an ATP-dependent pump, pulling dsDNA into and through the RuvAB complex. RuvB forms 2 homohexamers on either side of HJ DNA bound by 1 or 2 RuvA tetramers; 4 subunits per hexamer contact DNA at a time. Coordinated motions by a converter formed by DNA-disengaged RuvB subunits stimulates ATP hydrolysis and nucleotide exchange. Immobilization of the converter enables RuvB to convert the ATP-contained energy into a lever motion, pulling 2 nucleotides of DNA out of the RuvA tetramer per ATP hydrolyzed, thus driving DNA branch migration. The RuvB motors rotate together with the DNA substrate, which together with the progressing nucleotide cycle form the mechanistic basis for DNA recombination by continuous HJ branch migration. Branch migration allows RuvC to scan DNA until it finds its consensus sequence, where it cleaves and resolves cruciform DNA. This Treponema denticola (strain ATCC 35405 / DSM 14222 / CIP 103919 / JCM 8153 / KCTC 15104) protein is Holliday junction branch migration complex subunit RuvB.